Reading from the N-terminus, the 256-residue chain is MKHYVLVHGGCHGAWCWYKVKPMLEHSGHRVTVFDLTAHGVNMSRVEDIQTLEDFAKPLLEVLESFGSDDKVVLVAHSLGGIPAALAADMFPSKISVAVFVTSFMPDTTNPPSYVFEKFLGSITEEERMDFELGSYGTDDHPLKTAFLGPNYLKNMYLLSPIEDYELAKMLMRVTPAITSNLTGTKSLTAQGYGSISRVYIVCGEDKGIRVDFQRWMIENSPVKEVMEIKDADHMPMFSKPHELCDRLLKIADKYP.

The Acyl-ester intermediate role is filled by serine 78. Catalysis depends on charge relay system residues aspartate 206 and histidine 234.

Belongs to the AB hydrolase superfamily. Methylesterase family.

The catalysed reaction is methyl (indol-3-yl)acetate + H2O = (indol-3-yl)acetate + methanol + H(+). It catalyses the reaction methyl (-)-jasmonate + H2O = jasmonate + methanol + H(+). It carries out the reaction methyl salicylate + H2O = salicylate + methanol + H(+). Its pathway is plant hormone biosynthesis. It functions in the pathway lipid metabolism; oxylipin biosynthesis. Esterase activity is down-regulated by salicylic acid (SA). Functionally, methylesterase shown to have carboxylesterase activity, methyl indole-3-acetic acid (MeIAA) esterase activity, methyl salicylate (MeSA) esterase activity and methyl jasmonate (MeJA) esterase activity in vitro. Required to convert methyl salicylate (MeSA) to salicylic acid (SA) as part of the signal transduction pathways that activate systemic acquired resistance in systemic tissue. MeSA is believed to be an inactive form that needs to be demethylated to exert a biological effect. The chain is Methylesterase 9 from Arabidopsis thaliana (Mouse-ear cress).